Consider the following 292-residue polypeptide: 4-hydroxy-tetrahydrodipicolinate synthase (292 aa).

Residue T44 coordinates pyruvate. The Proton donor/acceptor role is filled by Y132. The active-site Schiff-base intermediate with substrate is K160. I202 is a binding site for pyruvate.

This sequence belongs to the DapA family. In terms of assembly, homotetramer; dimer of dimers.

It is found in the cytoplasm. It carries out the reaction L-aspartate 4-semialdehyde + pyruvate = (2S,4S)-4-hydroxy-2,3,4,5-tetrahydrodipicolinate + H2O + H(+). The protein operates within amino-acid biosynthesis; L-lysine biosynthesis via DAP pathway; (S)-tetrahydrodipicolinate from L-aspartate: step 3/4. Catalyzes the condensation of (S)-aspartate-beta-semialdehyde [(S)-ASA] and pyruvate to 4-hydroxy-tetrahydrodipicolinate (HTPA). In Magnetococcus marinus (strain ATCC BAA-1437 / JCM 17883 / MC-1), this protein is 4-hydroxy-tetrahydrodipicolinate synthase.